The following is a 445-amino-acid chain: tRNA-2-methylthio-N(6)-dimethylallyladenosine synthase (445 aa).

The region spanning 3-124 (KNLYIKTYGC…LPELISKIVR (122 aa)) is the MTTase N-terminal domain. Residues Cys-12, Cys-48, Cys-87, Cys-162, Cys-166, and Cys-169 each contribute to the [4Fe-4S] cluster site. The region spanning 148 to 380 (YPQGASSFIS…QKELMDQQLA (233 aa)) is the Radical SAM core domain. The TRAM domain maps to 383 to 445 (ESCVGSTIKV…SLNSLTGEIL (63 aa)).

Belongs to the methylthiotransferase family. MiaB subfamily. As to quaternary structure, monomer. The cofactor is [4Fe-4S] cluster.

It is found in the cytoplasm. It catalyses the reaction N(6)-dimethylallyladenosine(37) in tRNA + (sulfur carrier)-SH + AH2 + 2 S-adenosyl-L-methionine = 2-methylsulfanyl-N(6)-dimethylallyladenosine(37) in tRNA + (sulfur carrier)-H + 5'-deoxyadenosine + L-methionine + A + S-adenosyl-L-homocysteine + 2 H(+). Its function is as follows. Catalyzes the methylthiolation of N6-(dimethylallyl)adenosine (i(6)A), leading to the formation of 2-methylthio-N6-(dimethylallyl)adenosine (ms(2)i(6)A) at position 37 in tRNAs that read codons beginning with uridine. In Rickettsia akari (strain Hartford), this protein is tRNA-2-methylthio-N(6)-dimethylallyladenosine synthase.